The sequence spans 88 residues: UPF0297 protein BcerKBAB4_4234 (88 aa).

The protein belongs to the UPF0297 family.

This Bacillus mycoides (strain KBAB4) (Bacillus weihenstephanensis) protein is UPF0297 protein BcerKBAB4_4234.